The primary structure comprises 257 residues: 3-methyl-2-oxobutanoate hydroxymethyltransferase (257 aa).

Mg(2+) contacts are provided by Asp-42 and Asp-86. 3-methyl-2-oxobutanoate-binding positions include 42–43, Asp-86, and Lys-116; that span reads DS. Glu-118 is a Mg(2+) binding site. The Proton acceptor role is filled by Glu-185.

The protein belongs to the PanB family. As to quaternary structure, homodecamer; pentamer of dimers. The cofactor is Mg(2+).

The protein localises to the cytoplasm. It carries out the reaction 3-methyl-2-oxobutanoate + (6R)-5,10-methylene-5,6,7,8-tetrahydrofolate + H2O = 2-dehydropantoate + (6S)-5,6,7,8-tetrahydrofolate. It participates in cofactor biosynthesis; (R)-pantothenate biosynthesis; (R)-pantoate from 3-methyl-2-oxobutanoate: step 1/2. Its function is as follows. Catalyzes the reversible reaction in which hydroxymethyl group from 5,10-methylenetetrahydrofolate is transferred onto alpha-ketoisovalerate to form ketopantoate. The sequence is that of 3-methyl-2-oxobutanoate hydroxymethyltransferase from Prochlorococcus marinus (strain MIT 9312).